Reading from the N-terminus, the 210-residue chain is MSIVHPDTSKYEFNFEPFLRKEYSFSLDPDRPVCQYYNSREGIKSCPNGARCPNKHVLPIFQNKIVCKHWLRGLCKKNDQCEYLHEYNLRKMPECVFFTKNGYCTQSPECQYLHVDHKSQLEECEDYNMGFCPSGPACTKKHVKKVLCPRYLVGFCPLGKDCDWSHPKFKVPSEHSKLRIKKDEHINTRKMDEERERRLNAIINGDILVT.

5 C3H1-type zinc fingers span residues 28–59 (DPDRPVCQYYNSREGIKSCPNGARCPNKHVLP), 61–88 (FQNKIVCKHWLRGLCKKNDQCEYLHEYN), 89–117 (LRKMPECVFFTKNGYCTQSPECQYLHVDH), 118–142 (KSQLEECEDYNMGFCPSGPACTKKH), and 143–169 (VKKVLCPRYLVGFCPLGKDCDWSHPKF).

Belongs to the CPSF4/YTH1 family.

Its subcellular location is the nucleus. Its function is as follows. Component of the cleavage factor I (CF I) involved in pre-mRNA 3'-end processing. This Kluyveromyces lactis (strain ATCC 8585 / CBS 2359 / DSM 70799 / NBRC 1267 / NRRL Y-1140 / WM37) (Yeast) protein is mRNA 3'-end-processing protein YTH1 (YTH1).